We begin with the raw amino-acid sequence, 201 residues long: Peptidyl-tRNA hydrolase (201 aa).

Y14 is a binding site for tRNA. The active-site Proton acceptor is H19. 3 residues coordinate tRNA: Y64, N66, and N112.

Belongs to the PTH family. Monomer.

It localises to the cytoplasm. It carries out the reaction an N-acyl-L-alpha-aminoacyl-tRNA + H2O = an N-acyl-L-amino acid + a tRNA + H(+). Functionally, hydrolyzes ribosome-free peptidyl-tRNAs (with 1 or more amino acids incorporated), which drop off the ribosome during protein synthesis, or as a result of ribosome stalling. Catalyzes the release of premature peptidyl moieties from peptidyl-tRNA molecules trapped in stalled 50S ribosomal subunits, and thus maintains levels of free tRNAs and 50S ribosomes. The chain is Peptidyl-tRNA hydrolase from Bradyrhizobium sp. (strain ORS 278).